The sequence spans 646 residues: Wee1-like protein kinase (646 aa).

The disordered stretch occupies residues 1–181; that stretch reads MSFLSRQQPP…GTPPHKTFRK (181 aa). The segment covering 32-43 has biased composition (acidic residues); the sequence is DCEEEEEEEEEE. Ser53 carries the phosphoserine; by PLK1 modification. Ser78 and Ser85 each carry phosphoserine. Low complexity predominate over residues 94–103; sequence LLPGACPGAD. Ser123 is modified (phosphoserine; by CDK1). A phosphoserine mark is found at Ser127, Ser137, Ser139, Ser150, and Ser165. Residues 158 to 170 are compositionally biased toward basic and acidic residues; it reads RAGEGRRSPRPDH. Phosphothreonine occurs at positions 187, 190, and 239. Residues Ser270, Ser307, and Ser312 each carry the phosphoserine modification. The Protein kinase domain maps to 299-569; sequence FHELEKIGSG…AMALVKHSVL (271 aa). ATP-binding positions include 305 to 313 and Lys328; that span reads IGSGEFGSV. Asn342 lines the Mg(2+) pocket. Asp426 acts as the Proton acceptor in catalysis. Mg(2+) is bound by residues Asn431, Asp463, and Gly465. Ser642 carries the post-translational modification Phosphoserine; by BRSK1 and BRSK2.

This sequence belongs to the protein kinase superfamily. Ser/Thr protein kinase family. WEE1 subfamily. It depends on Mg(2+) as a cofactor. Post-translationally, phosphorylated during M and G1 phases. Also autophosphorylated. Phosphorylation at Ser-642 by BRSK1 and BRSK2 in post-mitotic neurons, leads to down-regulate WEE1 activity in polarized neurons. Phosphorylated at Ser-53 and Ser-123 by PLK1 and CDK1, respectively, generating an signal for degradation that can be recognized by the SCF(BTRC) complex, leading to its ubiquitination and degradation at the onset of G2/M phase. Dephosphorylated at Thr-239 by CTDP1. Dephosphorylated at Ser-53 and Ser-123 by the serine/threonine-protein phosphatase 2A preventing its ubiquitin-mediated degradation. In terms of processing, ubiquitinated and degraded at the onset of G2/M phase.

It is found in the nucleus. It catalyses the reaction L-tyrosyl-[protein] + ATP = O-phospho-L-tyrosyl-[protein] + ADP + H(+). Synthesis is increased during S and G2 phases, presumably by an increase in transcription; activity is decreased by phosphorylation during M phase. Protein levels fall in M phase as a result of decreased synthesis combined with degradation. Activity seems to be negatively regulated by phosphorylation upon entry into mitosis, although N-terminal phosphorylation might also regulate the protein stability via protection from proteolysis or might regulate the subcellular location. Functionally, acts as a negative regulator of entry into mitosis (G2 to M transition) by protecting the nucleus from cytoplasmically activated cyclin B1-complexed CDK1 before the onset of mitosis by mediating phosphorylation of CDK1 on 'Tyr-15'. Specifically phosphorylates and inactivates cyclin B1-complexed CDK1 reaching a maximum during G2 phase and a minimum as cells enter M phase. Phosphorylation of cyclin B1-CDK1 occurs exclusively on 'Tyr-15' and phosphorylation of monomeric CDK1 does not occur. Its activity increases during S and G2 phases and decreases at M phase when it is hyperphosphorylated. A correlated decrease in protein level occurs at M/G1 phase, probably due to its degradation. This is Wee1-like protein kinase from Homo sapiens (Human).